The chain runs to 205 residues: GTP cyclohydrolase 1 (205 aa).

Zn(2+)-binding residues include cysteine 94, histidine 97, and cysteine 165.

It belongs to the GTP cyclohydrolase I family. Homomer.

The catalysed reaction is GTP + H2O = 7,8-dihydroneopterin 3'-triphosphate + formate + H(+). It participates in cofactor biosynthesis; 7,8-dihydroneopterin triphosphate biosynthesis; 7,8-dihydroneopterin triphosphate from GTP: step 1/1. The chain is GTP cyclohydrolase 1 from Sinorhizobium fredii (strain NBRC 101917 / NGR234).